Reading from the N-terminus, the 554-residue chain is uncharacterized protein (554 aa).

To M.jannaschii MJ0047, MJ0162 and MJ1236.

This is an uncharacterized protein from Synechocystis sp. (strain ATCC 27184 / PCC 6803 / Kazusa).